The primary structure comprises 262 residues: Caffeyl-CoA reductase-Etf complex subunit CarD (262 aa).

This sequence belongs to the ETF beta-subunit/FixA family. In terms of assembly, part of the homotrimeric caffeyl-CoA reductase-Etf complex composed of (R)-2-hydroxyisocaproyl-CoA dehydratase CarC, and the electron transfer flavoprotein (ETF) alpha (CarE) and beta (CarD) subunits. It depends on FAD as a cofactor. The cofactor is AMP.

Its subcellular location is the cytoplasm. The enzyme catalyses hydrocaffeoyl-CoA + 2 reduced [2Fe-2S]-[ferredoxin] + 2 NAD(+) = (E)-caffeoyl-CoA + 2 oxidized [2Fe-2S]-[ferredoxin] + 2 NADH. Its function is as follows. Caffeyl-CoA reductase-Etf complex catalyzes the reduction of caffeyl-CoA to yield hydrocaffeyl-CoA. It couples the endergonic ferredoxin reduction with NADH as reductant to the exergonic reduction of caffeoyl-CoA with the same reductant. It uses the mechanism of electron bifurcation to overcome the steep energy barrier in ferredoxin reduction. The electron transfer flavoprotein (Etf) mediates the electron transfer between the different donors and acceptors. The complex can also reduce 4-coumaroyl-CoA and feruloyl-CoA. This Acetobacterium woodii (strain ATCC 29683 / DSM 1030 / JCM 2381 / KCTC 1655 / WB1) protein is Caffeyl-CoA reductase-Etf complex subunit CarD.